The primary structure comprises 299 residues: Acetylglutamate kinase (299 aa).

Substrate is bound by residues 72–73 (GG), arginine 94, and asparagine 196.

This sequence belongs to the acetylglutamate kinase family. ArgB subfamily.

The protein resides in the cytoplasm. It carries out the reaction N-acetyl-L-glutamate + ATP = N-acetyl-L-glutamyl 5-phosphate + ADP. It functions in the pathway amino-acid biosynthesis; L-arginine biosynthesis; N(2)-acetyl-L-ornithine from L-glutamate: step 2/4. Its function is as follows. Catalyzes the ATP-dependent phosphorylation of N-acetyl-L-glutamate. The sequence is that of Acetylglutamate kinase from Burkholderia vietnamiensis (strain G4 / LMG 22486) (Burkholderia cepacia (strain R1808)).